We begin with the raw amino-acid sequence, 433 residues long: MPCGKQGNLQVPGSKVLPGLGEGCKEMWLRKVIYGGEVWGKSPEPEFPSLVNLCQSWKINNLMSTVHSDEAGMLSYFLFEELMRCDKDSMPDGNLSEEEKLFLSYFPLHKFELEQNIKELNTLADQVDTTHELLTKTSLVASSSGAVSGVMNILGLALAPVTAGGSLMLSATGTGLGAAAAITNIVTNVLENRSNSAARDKASRLGPLTTSHEAFGGINWSEIEAAGFCVNKCVKAIQGIKDLHAYQMAKSNSGFMAMVKNFVAKRHIPFWTARGVQRAFEGTTLAMTNGAWVMGAAGAGFLLMKDMSSFLQSWKHLEDGARTETAEELRALAKKLEQELDRLTQHHRHLPQKASQTCSSSRGRAVRGSRVVKPEGSRSPLPWPVVEHQPRLGPGVALRTPKRTVSAPRMLGHQPAPPAPARKGRQAPGRHRQ.

A disordered region spans residues 346 to 433; that stretch reads HHRHLPQKAS…GRQAPGRHRQ (88 aa). The span at 359–371 shows a compositional bias: low complexity; that stretch reads SSSRGRAVRGSRV. Over residues 422–433 the composition is skewed to basic residues; it reads RKGRQAPGRHRQ.

Belongs to the apolipoprotein L family. As to expression, low level of expression; detected in uterus, testis, skeletal muscle and stomach.

Its subcellular location is the cytoplasm. Its function is as follows. May affect the movement of lipids in the cytoplasm or allow the binding of lipids to organelles. In Homo sapiens (Human), this protein is Apolipoprotein L5 (APOL5).